A 567-amino-acid polypeptide reads, in one-letter code: Myo-inositol transporter 1 (567 aa).

The Cytoplasmic segment spans residues M1–A88. The disordered stretch occupies residues I14–L42. A compositionally biased stretch (polar residues) spans T16–A33. A helical membrane pass occupies residues A89–I109. At K110 to E123 the chain is on the extracellular side. A helical membrane pass occupies residues V124–S144. Topologically, residues D145 to R150 are cytoplasmic. The chain crosses the membrane as a helical span at residues L151–H171. The Extracellular portion of the chain corresponds to T172–R180. Residues F181–L201 form a helical membrane-spanning segment. At A202 to R209 the chain is on the cytoplasmic side. A helical transmembrane segment spans residues L210–A230. Topologically, residues S231–R240 are extracellular. Residues W241–P261 form a helical membrane-spanning segment. The Cytoplasmic segment spans residues E262 to Q343. Residues L344 to N364 traverse the membrane as a helical segment. N-linked (GlcNAc...) asparagine glycosylation is present at N365. Topologically, residues N365–T367 are extracellular. Residues A368–V388 form a helical membrane-spanning segment. Topologically, residues D389–M397 are cytoplasmic. The chain crosses the membrane as a helical span at residues L398 to L418. Topologically, residues T419 to S435 are extracellular. A helical membrane pass occupies residues L436–G456. Residues N457–S476 lie on the Cytoplasmic side of the membrane. A helical membrane pass occupies residues I477–M497. The Extracellular segment spans residues D498–S503. The chain crosses the membrane as a helical span at residues G504–Y524. At P525–E567 the chain is on the cytoplasmic side.

This sequence belongs to the major facilitator superfamily. Sugar transporter (TC 2.A.1.1) family.

It localises to the cell membrane. The catalysed reaction is myo-inositol(out) + H(+)(out) = myo-inositol(in) + H(+)(in). May function as a transporter or as a sensor for myo-inositol. This Cryptococcus neoformans var. grubii serotype A (strain H99 / ATCC 208821 / CBS 10515 / FGSC 9487) (Filobasidiella neoformans var. grubii) protein is Myo-inositol transporter 1.